The primary structure comprises 673 residues: UvrABC system protein B (673 aa).

In terms of domain architecture, Helicase ATP-binding spans 26–414; the sequence is EGLEDGLAHQ…GGDVVDQVVR (389 aa). Residue 39-46 participates in ATP binding; the sequence is GVTGSGKT. A Beta-hairpin motif is present at residues 92–115; it reads YYDYYQPEAYVPSSDTFIEKDASV. The region spanning 431–597 is the Helicase C-terminal domain; it reads QVDDLLSEIR…GLNKKVVDIL (167 aa). In terms of domain architecture, UVR spans 633–668; that stretch reads QQKIHELEGLMMQHAQNLEFEEAAQIRDQLHQLREL.

This sequence belongs to the UvrB family. Forms a heterotetramer with UvrA during the search for lesions. Interacts with UvrC in an incision complex.

Its subcellular location is the cytoplasm. Functionally, the UvrABC repair system catalyzes the recognition and processing of DNA lesions. A damage recognition complex composed of 2 UvrA and 2 UvrB subunits scans DNA for abnormalities. Upon binding of the UvrA(2)B(2) complex to a putative damaged site, the DNA wraps around one UvrB monomer. DNA wrap is dependent on ATP binding by UvrB and probably causes local melting of the DNA helix, facilitating insertion of UvrB beta-hairpin between the DNA strands. Then UvrB probes one DNA strand for the presence of a lesion. If a lesion is found the UvrA subunits dissociate and the UvrB-DNA preincision complex is formed. This complex is subsequently bound by UvrC and the second UvrB is released. If no lesion is found, the DNA wraps around the other UvrB subunit that will check the other stand for damage. The polypeptide is UvrABC system protein B (Shigella flexneri).